Reading from the N-terminus, the 86-residue chain is Cell division topological specificity factor (86 aa).

The protein belongs to the MinE family.

Functionally, prevents the cell division inhibition by proteins MinC and MinD at internal division sites while permitting inhibition at polar sites. This ensures cell division at the proper site by restricting the formation of a division septum at the midpoint of the long axis of the cell. This chain is Cell division topological specificity factor, found in Shewanella woodyi (strain ATCC 51908 / MS32).